The chain runs to 226 residues: Urease accessory protein UreF (226 aa).

The protein belongs to the UreF family. UreD, UreF and UreG form a complex that acts as a GTP-hydrolysis-dependent molecular chaperone, activating the urease apoprotein by helping to assemble the nickel containing metallocenter of UreC. The UreE protein probably delivers the nickel.

The protein resides in the cytoplasm. In terms of biological role, required for maturation of urease via the functional incorporation of the urease nickel metallocenter. This Burkholderia ambifaria (strain MC40-6) protein is Urease accessory protein UreF.